The primary structure comprises 88 residues: YcgL domain-containing protein HI_1446 (88 aa).

The YcgL domain occupies 1–85 (MLCAIYKSKK…QDDGLFNSLS (85 aa)).

The chain is YcgL domain-containing protein HI_1446 from Haemophilus influenzae (strain ATCC 51907 / DSM 11121 / KW20 / Rd).